Consider the following 256-residue polypeptide: MQIKIGEIESKLNNIIEEEGAAYFVLIDPDEKNYREIANHVKDYADAIIIGGSIGIINLDEVTKEIKEITGLPVILFPGNVDGVTKEADAVLFMSLMNSKNTYWNMTAPTLGALTIKKYGLETLPMAYLGIEPISKTAVGFVGEVNEIPQKKPEIAGIYSLSASYFGMRWVYLEAGSGAEYPVNNEMIGVSKKLSGINIIVGGGIRTPEVAYEKVMSGADVIVTGTLTEKDPKAVEEMKKAIKKAGMDKLKMLSKK.

Residues aspartate 28 and serine 53 each contribute to the Mg(2+) site. Sn-glycerol 1-phosphate contacts are provided by residues 172 to 178 (YLEAGSG), 203 to 204 (GG), and 225 to 226 (GT).

Belongs to the GGGP/HepGP synthase family. Group II subfamily. Mg(2+) serves as cofactor.

It localises to the cytoplasm. It carries out the reaction sn-glycerol 1-phosphate + (2E,6E,10E)-geranylgeranyl diphosphate = sn-3-O-(geranylgeranyl)glycerol 1-phosphate + diphosphate. The protein operates within membrane lipid metabolism; glycerophospholipid metabolism. In terms of biological role, prenyltransferase that catalyzes the transfer of the geranylgeranyl moiety of geranylgeranyl diphosphate (GGPP) to the C3 hydroxyl of sn-glycerol-1-phosphate (G1P). This reaction is the first ether-bond-formation step in the biosynthesis of archaeal membrane lipids. This chain is Geranylgeranylglyceryl phosphate synthase, found in Methanococcus maripaludis (strain C5 / ATCC BAA-1333).